Here is a 20-residue protein sequence, read N- to C-terminus: Toxin b subunit beta (20 aa).

As to quaternary structure, toxin b is a heterodimer composed of toxin alpha and toxin beta. Expressed by the venom gland.

Its subcellular location is the secreted. Functionally, binds to sodium channels (Nav) and affects the channel activation process. This Androctonus crassicauda (Arabian fat-tailed scorpion) protein is Toxin b subunit beta.